Consider the following 300-residue polypeptide: tRNA dimethylallyltransferase (300 aa).

8–15 (GASASGKS) is an ATP binding site. 10 to 15 (SASGKS) lines the substrate pocket. An interaction with substrate tRNA region spans residues 33–36 (DSLS).

This sequence belongs to the IPP transferase family. As to quaternary structure, monomer. It depends on Mg(2+) as a cofactor.

The catalysed reaction is adenosine(37) in tRNA + dimethylallyl diphosphate = N(6)-dimethylallyladenosine(37) in tRNA + diphosphate. Its function is as follows. Catalyzes the transfer of a dimethylallyl group onto the adenine at position 37 in tRNAs that read codons beginning with uridine, leading to the formation of N6-(dimethylallyl)adenosine (i(6)A). This chain is tRNA dimethylallyltransferase, found in Wolinella succinogenes (strain ATCC 29543 / DSM 1740 / CCUG 13145 / JCM 31913 / LMG 7466 / NCTC 11488 / FDC 602W) (Vibrio succinogenes).